A 185-amino-acid polypeptide reads, in one-letter code: Pyruvate/ketoisovalerate oxidoreductases common subunit gamma (185 aa).

In terms of assembly, heterotetramer of one alpha, one beta, one delta and one gamma chain.

It catalyses the reaction 2 oxidized [2Fe-2S]-[ferredoxin] + pyruvate + CoA = 2 reduced [2Fe-2S]-[ferredoxin] + acetyl-CoA + CO2 + H(+). The catalysed reaction is 3-methyl-2-oxobutanoate + 2 oxidized [2Fe-2S]-[ferredoxin] + CoA = 2-methylpropanoyl-CoA + 2 reduced [2Fe-2S]-[ferredoxin] + CO2 + H(+). The chain is Pyruvate/ketoisovalerate oxidoreductases common subunit gamma (porG) from Pyrococcus furiosus (strain ATCC 43587 / DSM 3638 / JCM 8422 / Vc1).